A 138-amino-acid polypeptide reads, in one-letter code: Large ribosomal subunit protein bL19 (138 aa).

The protein belongs to the bacterial ribosomal protein bL19 family.

This protein is located at the 30S-50S ribosomal subunit interface and may play a role in the structure and function of the aminoacyl-tRNA binding site. The polypeptide is Large ribosomal subunit protein bL19 (Rickettsia canadensis (strain McKiel)).